A 124-amino-acid polypeptide reads, in one-letter code: Fluoride-specific ion channel FluC (124 aa).

4 consecutive transmembrane segments (helical) span residues 1–21 (MIPLILAVSAGGVAGTLLRFA), 38–58 (TLAVNIVGCLLIGVLYGLFLV), 69–89 (GLIVGFLGGLTTFSSFSLDTV), and 97–117 (VALALGYAALSVFGGLLATWA). Gly76 and Thr79 together coordinate Na(+).

Belongs to the fluoride channel Fluc/FEX (TC 1.A.43) family.

It localises to the cell inner membrane. The catalysed reaction is fluoride(in) = fluoride(out). Na(+) is not transported, but it plays an essential structural role and its presence is essential for fluoride channel function. Fluoride-specific ion channel. Important for reducing fluoride concentration in the cell, thus reducing its toxicity. In Pseudomonas fluorescens (strain ATCC BAA-477 / NRRL B-23932 / Pf-5), this protein is Fluoride-specific ion channel FluC.